Here is a 676-residue protein sequence, read N- to C-terminus: Transketolase 7 (676 aa).

H36 is a substrate binding site. Residues H76 and 125 to 127 contribute to the thiamine diphosphate site; that span reads GPL. Residue D166 participates in Mg(2+) binding. Thiamine diphosphate is bound by residues G167 and N196. N196 and I198 together coordinate Mg(2+). Substrate contacts are provided by H273, R367, and S394. H273 serves as a coordination point for thiamine diphosphate. E421 and F448 together coordinate thiamine diphosphate. Catalysis depends on E421, which acts as the Proton donor. Residues H472, D480, and R531 each coordinate substrate.

Belongs to the transketolase family. As to quaternary structure, homodimer. Requires Mg(2+) as cofactor. Ca(2+) is required as a cofactor. Mn(2+) serves as cofactor. The cofactor is Co(2+). It depends on thiamine diphosphate as a cofactor. As to expression, leaves and roots.

It carries out the reaction D-sedoheptulose 7-phosphate + D-glyceraldehyde 3-phosphate = aldehydo-D-ribose 5-phosphate + D-xylulose 5-phosphate. In terms of biological role, could be involved in the conversion of sugars, which are a major phenomenon in the rehydration process. Catalyzes the transfer of a two-carbon ketol group from a ketose donor to an aldose acceptor, via a covalent intermediate with the cofactor thiamine pyrophosphate. The chain is Transketolase 7 (TKT7) from Craterostigma plantagineum (Blue gem).